The chain runs to 418 residues: Serine hydroxymethyltransferase (418 aa).

Residues Leu-121 and 125 to 127 (GHL) contribute to the (6S)-5,6,7,8-tetrahydrofolate site. An N6-(pyridoxal phosphate)lysine modification is found at Lys-230. (6S)-5,6,7,8-tetrahydrofolate contacts are provided by residues Glu-246 and 355-357 (SPF).

The protein belongs to the SHMT family. In terms of assembly, homodimer. Pyridoxal 5'-phosphate is required as a cofactor.

Its subcellular location is the cytoplasm. It carries out the reaction (6R)-5,10-methylene-5,6,7,8-tetrahydrofolate + glycine + H2O = (6S)-5,6,7,8-tetrahydrofolate + L-serine. The protein operates within one-carbon metabolism; tetrahydrofolate interconversion. It functions in the pathway amino-acid biosynthesis; glycine biosynthesis; glycine from L-serine: step 1/1. In terms of biological role, catalyzes the reversible interconversion of serine and glycine with tetrahydrofolate (THF) serving as the one-carbon carrier. This reaction serves as the major source of one-carbon groups required for the biosynthesis of purines, thymidylate, methionine, and other important biomolecules. Also exhibits THF-independent aldolase activity toward beta-hydroxyamino acids, producing glycine and aldehydes, via a retro-aldol mechanism. The chain is Serine hydroxymethyltransferase from Streptococcus pneumoniae (strain Hungary19A-6).